A 71-amino-acid chain; its full sequence is Disintegrin tzabcanin (71 aa).

The Disintegrin domain occupies 1-71; the sequence is GEECDCGSPA…ADCPRNHFHA (71 aa). Intrachain disulfides connect Cys4–Cys19, Cys6–Cys14, Cys13–Cys36, Cys27–Cys33, Cys32–Cys57, and Cys45–Cys64. The Cell attachment site signature appears at 49 to 51; sequence RGD.

This sequence belongs to the venom metalloproteinase (M12B) family. P-II subfamily. P-IIa sub-subfamily. As to expression, expressed by the venom gland.

It localises to the secreted. Its function is as follows. Inhibits fibrinogen interaction with platelets. Acts by binding to alpha-IIb/beta-3 (ITGA2B/ITGB3) on the platelet surface and inhibits aggregation induced by ADP, thrombin, platelet-activating factor and collagen. Inhibits cell adhesion to vitronectin, probably by blocking its receptor integrin alpha-V/beta-3 (ITGAV/ITGB3), and to fibronectin in vitro. Shows little to no cytotoxicity in vitro. This chain is Disintegrin tzabcanin, found in Crotalus tzabcan (Yucatan neotropical rattlesnake).